Here is a 760-residue protein sequence, read N- to C-terminus: General transcription and DNA repair factor IIH helicase subunit XPD (760 aa).

Residues 7–283 (GLLVYFPYDY…KETDEQRLRE (277 aa)) form the Helicase ATP-binding domain. ATP is bound at residue 42–49 (MPSGTGKT). Cysteine 116, cysteine 134, cysteine 155, and cysteine 190 together coordinate [4Fe-4S] cluster. The DEAH box signature appears at 234–237 (DEAH). Residues 438-637 (MDASLAIKPV…TQSRILKARL (200 aa)) form a mediates interaction with MMS19 region. Residues 682–695 (KRFARADKRGKLPR) carry the Nuclear localization signal motif.

Belongs to the helicase family. RAD3/XPD subfamily. As to quaternary structure, component of the 7-subunit TFIIH core complex composed of XPB/ERCC3, XPD/ERCC2, GTF2H1, GTF2H2, GTF2H3, GTF2H4 and GTF2H5, which is active in NER. The core complex associates with the 3-subunit CDK-activating kinase (CAK) module composed of CCNH/cyclin H, CDK7 and MNAT1 to form the 10-subunit holoenzyme (holo-TFIIH) active in transcription. The interaction with GTF2H2 results in the stimulation of the 5'--&gt;3' helicase activity. Component of the MMXD complex, which includes CIAO1, ERCC2, CIAO2B, MMS19 and SLC25A5. Interacts with CIAO1 and CIAO2B; the interaction WITH CIAO2B is direct. Interacts with ATF7IP. Interacts directly with MMS19. Part of TBP-based Pol II pre-initiation complex (PIC), in which Pol II core assembles with general transcription factors and other specific initiation factors including GTF2E1, GTF2E2, GTF2F1, GTF2F2, TCEA1, ERCC2, ERCC3, GTF2H2, GTF2H3, GTF2H4, GTF2H5, GTF2A1, GTF2A2, GTF2B and TBP; this large multi-subunit PIC complex mediates DNA unwinding and targets Pol II core to the transcription start site where the first phosphodiester bond forms. Mg(2+) serves as cofactor. The cofactor is [4Fe-4S] cluster. Post-translationally, ISGylated.

It is found in the nucleus. The protein resides in the cytoplasm. It localises to the cytoskeleton. Its subcellular location is the spindle. It catalyses the reaction Couples ATP hydrolysis with the unwinding of duplex DNA at the replication fork by translocating in the 5'-3' direction. This creates two antiparallel DNA single strands (ssDNA). The leading ssDNA polymer is the template for DNA polymerase III holoenzyme which synthesizes a continuous strand.. The enzyme catalyses ATP + H2O = ADP + phosphate + H(+). In terms of biological role, ATP-dependent 5'-3' DNA helicase, component of the general transcription and DNA repair factor IIH (TFIIH) core complex, which is involved in general and transcription-coupled nucleotide excision repair (NER) of damaged DNA and, when complexed to CDK-activating kinase (CAK), involved in transcription by RNA polymerase II. In NER, TFIIH acts by opening DNA around the lesion to allow the excision of the damaged oligonucleotide and its replacement by a new DNA fragment. The ATP-dependent helicase activity of XPD/ERCC2 is required for DNA opening. In transcription, TFIIH has an essential role in transcription initiation. When the pre-initiation complex (PIC) has been established, TFIIH is required for promoter opening and promoter escape. Phosphorylation of the C-terminal tail (CTD) of the largest subunit of RNA polymerase II by the kinase module CAK controls the initiation of transcription. XPD/ERCC2 acts by forming a bridge between CAK and the core-TFIIH complex. Involved in the regulation of vitamin-D receptor activity. As part of the mitotic spindle-associated MMXD complex it plays a role in chromosome segregation. Might have a role in aging process and could play a causative role in the generation of skin cancers. The protein is General transcription and DNA repair factor IIH helicase subunit XPD (ERCC2) of Bos taurus (Bovine).